Here is a 1450-residue protein sequence, read N- to C-terminus: Inactive serine/threonine-protein kinase TEX14 (1450 aa).

3 ANK repeats span residues 27 to 54 (LHEYAKQGNCVKLKKILKKGVCVDAVNT), 55 to 84 (QGQSALFVAALLGHVKLVDVLVDYGSDPNH), and 88 to 117 (DGSTPVHAAAFSGNQWILSKLLTAGGDLRL). Phosphoserine occurs at positions 175 and 186. The 314-residue stretch at 199–512 (IISAQNIYSF…ILKNDLKEFI (314 aa)) folds into the Protein kinase domain. Residues 205 to 213 (IYSFGFGKF) and K267 contribute to the ATP site. The residue at position 431 (S431) is a Phosphoserine; by PLK1. A phosphoserine mark is found at S561 and S662. Residues 700–720 (SDSLGSLNLPEPTREAKGKTS) form a disordered region. The GPPX3Y motif lies at 791 to 797 (GPPSLAY). 4 disordered regions span residues 852–906 (VSEE…MASV), 947–977 (PPWNPQSSAPFESKVENESTPLPRPPIRGPE), 992–1012 (DEPKGNTKFGKMDNSDCDKNK), and 1035–1062 (QPEQNEASQASCDTSVGTEKFYSTSSPI). 2 stretches are compositionally biased toward polar residues: residues 875–886 (KQSTGEQLPSTQ) and 894–906 (KNTNQNSRSMASV). Positions 889-897 (RESLEKNTN) match the D-box motif. Residues 992–1011 (DEPKGNTKFGKMDNSDCDKN) are compositionally biased toward basic and acidic residues. Over residues 1038–1061 (QNEASQASCDTSVGTEKFYSTSSP) the composition is skewed to polar residues. S1060 and S1221 each carry phosphoserine. Disordered stretches follow at residues 1261–1282 (THATKRKSLPRELAEATSQQHL) and 1300–1418 (KQQQ…SLGT). 2 stretches are compositionally biased toward polar residues: residues 1300-1311 (KQQQVSSLASHE) and 1332-1344 (TNSSKDSSFLSSR). Residues S1357 and S1358 each carry the phosphoserine modification. 2 stretches are compositionally biased toward basic and acidic residues: residues 1383-1397 (STREKKNKDQDVVEQ) and 1404-1413 (SIKPERRESD). Phosphoserine occurs at positions 1412 and 1449.

It belongs to the protein kinase superfamily. As to quaternary structure, interacts with KIF23 and RBM44. Interacts with CEP55; inhibiting interaction between CEP55 and PDCD6IP/ALIX and TSG101. In terms of processing, phosphorylated on Thr residues by CDK1 during early phases of mitosis, promoting the interaction with PLK1 and recruitment to kinetochores. Phosphorylated on Ser-431 by PLK1 during late prometaphase promotes the rapid depletion from kinetochores and its subsequent degradation by the APC/C complex. Detected in testis and spermatogonia. Not detectable in the other tissues tested.

It is found in the cytoplasm. Its subcellular location is the midbody. The protein localises to the chromosome. The protein resides in the centromere. It localises to the kinetochore. In terms of biological role, required both for the formation of intercellular bridges during meiosis and for kinetochore-microtubule attachment during mitosis. Intercellular bridges are evolutionarily conserved structures that connect differentiating germ cells and are required for spermatogenesis and male fertility. Acts by promoting the conversion of midbodies into intercellular bridges via its interaction with CEP55: interaction with CEP55 inhibits the interaction between CEP55 and PDCD6IP/ALIX and TSG101, blocking cell abscission and leading to transform midbodies into intercellular bridges. Also plays a role during mitosis: recruited to kinetochores by PLK1 during early mitosis and regulates the maturation of the outer kinetochores and microtubule attachment. Has no protein kinase activity in vitro. The polypeptide is Inactive serine/threonine-protein kinase TEX14 (Tex14) (Mus musculus (Mouse)).